Reading from the N-terminus, the 61-residue chain is U-scoloptoxin(14)-Sm1a (61 aa).

An N-terminal signal peptide occupies residues 1–24 (MNPKLCMLLLVCLMAFYVIETVQA).

It belongs to the scoloptoxin-14 family. In terms of processing, contains 4 disulfide bonds. In terms of tissue distribution, expressed by the venom gland.

It localises to the secreted. The polypeptide is U-scoloptoxin(14)-Sm1a (Scolopendra morsitans (Tanzanian blue ringleg centipede)).